We begin with the raw amino-acid sequence, 502 residues long: Tryptophan decarboxylase TDC1 (502 aa).

Positions 1-18 (MGSLDSNYDTESPASVGQ) are enriched in polar residues. The disordered stretch occupies residues 1–21 (MGSLDSNYDTESPASVGQFNP). N6-(pyridoxal phosphate)lysine is present on K319.

It belongs to the group II decarboxylase family. Requires pyridoxal 5'-phosphate as cofactor. Highly expressed in apex. Expressed in young stem and bark tissues. Expressed at low levels in leaves, fruits and seeds.

The enzyme catalyses L-tryptophan + H(+) = tryptamine + CO2. Involved in the biosynthesis of tryptamine. Supplies tryptamine for the indole moiety of camptothecin (CPT), an anti-cancer monoterpene alkaloid. Represents a key step in monoterpene indole alkaloid biosynthesis. Is specific for tryptophan, and inactive against tyrosine, phenylalanine and 3,4-dihydroxyphenylalanine (dopa). This Camptotheca acuminata (Happy tree) protein is Tryptophan decarboxylase TDC1.